A 670-amino-acid polypeptide reads, in one-letter code: DEAD-box ATP-dependent RNA helicase 16 (670 aa).

Positions 1–10 (MAAAAAASSM) are enriched in low complexity. The disordered stretch occupies residues 1 to 97 (MAAAAAASSM…EEREVSFDEL (97 aa)). Basic and acidic residues-rich tracts occupy residues 18–30 (AATE…HDEA) and 40–49 (NDGHTAHAAE). Positions 92-120 (VSFDELGLDEQLKRALRKKGLDKATPIQR) match the Q motif motif. A Helicase ATP-binding domain is found at 123-306 (IPLILEGKDV…KLLLHNPFIL (184 aa)). 136 to 143 (AKTGSGKT) is a binding site for ATP. Positions 254-257 (DEAD) match the DEAD box motif. One can recognise a Helicase C-terminal domain in the interval 340–523 (LVLLKLELIQ…PFPLLTKNAV (184 aa)). The segment at 616 to 670 (DIDKPRRRKRMGFKGGSGRSSDPLKTFSAEGKSRRRGRKERDGEQDRRKRKKVES) is disordered. Residues 654-670 (KERDGEQDRRKRKKVES) show a composition bias toward basic and acidic residues.

It belongs to the DEAD box helicase family. DDX56/DBP9 subfamily.

The enzyme catalyses ATP + H2O = ADP + phosphate + H(+). This Oryza sativa subsp. japonica (Rice) protein is DEAD-box ATP-dependent RNA helicase 16.